The primary structure comprises 451 residues: Trigger factor (451 aa).

Residues 165–250 (DDKLTIDFEG…LRQIQAREAL (86 aa)) form the PPIase FKBP-type domain.

The protein belongs to the FKBP-type PPIase family. Tig subfamily.

It localises to the cytoplasm. The catalysed reaction is [protein]-peptidylproline (omega=180) = [protein]-peptidylproline (omega=0). Involved in protein export. Acts as a chaperone by maintaining the newly synthesized protein in an open conformation. Functions as a peptidyl-prolyl cis-trans isomerase. The protein is Trigger factor of Helicobacter pylori (strain Shi470).